Here is a 279-residue protein sequence, read N- to C-terminus: Thymidylate synthase (279 aa).

DUMP is bound at residue Arg-29. His-59 contributes to the (6R)-5,10-methylene-5,6,7,8-tetrahydrofolate binding site. Residue 134 to 135 participates in dUMP binding; the sequence is RR. Cys-154 serves as the catalytic Nucleophile. DUMP-binding positions include 181 to 184, Asn-192, and 222 to 224; these read RSAD and HIY. Residue Asp-184 participates in (6R)-5,10-methylene-5,6,7,8-tetrahydrofolate binding. Ala-278 is a binding site for (6R)-5,10-methylene-5,6,7,8-tetrahydrofolate.

Belongs to the thymidylate synthase family. Bacterial-type ThyA subfamily. In terms of assembly, homodimer.

It is found in the cytoplasm. It catalyses the reaction dUMP + (6R)-5,10-methylene-5,6,7,8-tetrahydrofolate = 7,8-dihydrofolate + dTMP. Its pathway is pyrimidine metabolism; dTTP biosynthesis. Catalyzes the reductive methylation of 2'-deoxyuridine-5'-monophosphate (dUMP) to 2'-deoxythymidine-5'-monophosphate (dTMP) while utilizing 5,10-methylenetetrahydrofolate (mTHF) as the methyl donor and reductant in the reaction, yielding dihydrofolate (DHF) as a by-product. This enzymatic reaction provides an intracellular de novo source of dTMP, an essential precursor for DNA biosynthesis. The protein is Thymidylate synthase of Paracidovorax citrulli (strain AAC00-1) (Acidovorax citrulli).